The sequence spans 381 residues: Cytochrome b (381 aa).

Transmembrane regions (helical) follow at residues Phe-34–Met-54, Trp-78–Ile-99, Trp-114–Leu-134, and Phe-179–Leu-199. Heme b is bound by residues His-84 and His-98. Heme b contacts are provided by His-183 and His-197. Residue His-202 coordinates a ubiquinone. The next 4 helical transmembrane spans lie at Tyr-227–Met-247, Leu-289–His-309, Met-321–Gly-341, and Phe-348–Pro-368.

It belongs to the cytochrome b family. As to quaternary structure, the cytochrome bc1 complex contains 3 respiratory subunits (MT-CYB, CYC1 and UQCRFS1), 2 core proteins (UQCRC1 and UQCRC2) and probably 6 low-molecular weight proteins. Heme b is required as a cofactor.

The protein resides in the mitochondrion inner membrane. Component of the ubiquinol-cytochrome c reductase complex (complex III or cytochrome b-c1 complex) that is part of the mitochondrial respiratory chain. The b-c1 complex mediates electron transfer from ubiquinol to cytochrome c. Contributes to the generation of a proton gradient across the mitochondrial membrane that is then used for ATP synthesis. The protein is Cytochrome b (mt-cyb) of Prionace glauca (Blue shark).